Reading from the N-terminus, the 593-residue chain is NADH-quinone oxidoreductase subunit C/D (593 aa).

Residues 1 to 184 (MTADNAIFIP…DPYSLTLAKQ (184 aa)) are NADH dehydrogenase I subunit C. Residues 208–593 (DYMFLNLGPN…IDFVMADVDR (386 aa)) form an NADH dehydrogenase I subunit D region.

This sequence in the N-terminal section; belongs to the complex I 30 kDa subunit family. The protein in the C-terminal section; belongs to the complex I 49 kDa subunit family. In terms of assembly, NDH-1 is composed of 13 different subunits. Subunits NuoB, CD, E, F, and G constitute the peripheral sector of the complex.

It is found in the cell inner membrane. It catalyses the reaction a quinone + NADH + 5 H(+)(in) = a quinol + NAD(+) + 4 H(+)(out). In terms of biological role, NDH-1 shuttles electrons from NADH, via FMN and iron-sulfur (Fe-S) centers, to quinones in the respiratory chain. The immediate electron acceptor for the enzyme in this species is believed to be ubiquinone. Couples the redox reaction to proton translocation (for every two electrons transferred, four hydrogen ions are translocated across the cytoplasmic membrane), and thus conserves the redox energy in a proton gradient. This is NADH-quinone oxidoreductase subunit C/D from Pseudomonas putida (strain ATCC 47054 / DSM 6125 / CFBP 8728 / NCIMB 11950 / KT2440).